A 492-amino-acid polypeptide reads, in one-letter code: 2-succinylbenzoate--CoA ligase (492 aa).

Belongs to the ATP-dependent AMP-binding enzyme family. MenE subfamily.

It catalyses the reaction 2-succinylbenzoate + ATP + CoA = 2-succinylbenzoyl-CoA + AMP + diphosphate. It participates in quinol/quinone metabolism; 1,4-dihydroxy-2-naphthoate biosynthesis; 1,4-dihydroxy-2-naphthoate from chorismate: step 5/7. It functions in the pathway quinol/quinone metabolism; menaquinone biosynthesis. In terms of biological role, converts 2-succinylbenzoate (OSB) to 2-succinylbenzoyl-CoA (OSB-CoA). This is 2-succinylbenzoate--CoA ligase from Geobacillus sp. (strain WCH70).